An 88-amino-acid polypeptide reads, in one-letter code: Exodeoxyribonuclease 7 small subunit (88 aa).

Belongs to the XseB family. As to quaternary structure, heterooligomer composed of large and small subunits.

The protein localises to the cytoplasm. The catalysed reaction is Exonucleolytic cleavage in either 5'- to 3'- or 3'- to 5'-direction to yield nucleoside 5'-phosphates.. Bidirectionally degrades single-stranded DNA into large acid-insoluble oligonucleotides, which are then degraded further into small acid-soluble oligonucleotides. This is Exodeoxyribonuclease 7 small subunit from Bordetella bronchiseptica (strain ATCC BAA-588 / NCTC 13252 / RB50) (Alcaligenes bronchisepticus).